The following is a 294-amino-acid chain: MKPFLRWCFVATALTLAGCSNTSWRKSEVLAVPLQPTLQQEVILARMEQILASRALTDDERAQLLYERGVLYDSLGLRALARNDFSQALAIRPDMPEVFNYLGIYLTQAGNFDAAYEAFDSVLELDPTYNYAHLNRGIALYYGGRDKLAQDDLLAFYQDDPNDPFRSLWLYLAEQKLDEKQAKEVLKQHFEKSDKEQWGWNIVEFYLGNISEQTLMERLKADATDNTSLAEHLSETNFYLGKYYLSLGDLDSATALFKLAVANNVHNFVEHRYALLELSLLGQDQDDLAESDQQ.

An N-terminal signal peptide occupies residues 1–18 (MKPFLRWCFVATALTLAG). Residue Cys-19 is the site of N-palmitoyl cysteine attachment. Cys-19 is lipidated: S-diacylglycerol cysteine. TPR repeat units lie at residues 62-95 (AQLLYERGVLYDSLGLRALARNDFSQALAIRPDM), 96-129 (PEVFNYLGIYLTQAGNFDAAYEAFDSVLELDPTY), and 234-267 (SETNFYLGKYYLSLGDLDSATALFKLAVANNVHN).

In terms of assembly, homodimer.

It localises to the cell membrane. Its function is as follows. May be involved in cell division. May play a role in bacterial septation or regulation of cell wall degradation during cell division. This is Lipoprotein NlpI (nlpI) from Escherichia coli O157:H7.